An 893-amino-acid polypeptide reads, in one-letter code: TBC domain-containing protein kinase-like protein (893 aa).

Residues 1 to 273 (MFPLKDAEMG…PDQLMKDKVF (273 aa)) form the Protein kinase domain. The region spanning 466 to 651 (DIPPLMRGLT…HLWDTLLLGN (186 aa)) is the Rab-GAP TBC domain. The segment at 710–749 (YRQHAQPPKPSSDSSGGRSSAPYFSAECPDPPKTDLSRES) is disordered. Residues 720-729 (SSDSSGGRSS) show a composition bias toward low complexity. The region spanning 790–889 (SKPKLLVVDI…IKPTGLLTIP (100 aa)) is the Rhodanese domain.

Belongs to the protein kinase superfamily. Component of the FERRY complex composed of five subunits, TBCK, PPP1R21, FERRY3, CRYZL1 and GATD1 with a ratio of 1:2:1:2:4, respectively.

It localises to the cytoplasm. It is found in the cytoskeleton. The protein localises to the spindle. The protein resides in the midbody. Its subcellular location is the early endosome. In terms of biological role, component of the FERRY complex (Five-subunit Endosomal Rab5 and RNA/ribosome intermediary). The FERRY complex directly interacts with mRNAs and RAB5A, and functions as a RAB5A effector involved in the localization and the distribution of specific mRNAs most likely by mediating their endosomal transport. The complex recruits mRNAs and ribosomes to early endosomes through direct mRNA-interaction. Also involved in the modulation of mTOR signaling and expression of mTOR complex components. Involved in the control of actin-cytoskeleton organization. The chain is TBC domain-containing protein kinase-like protein from Homo sapiens (Human).